Consider the following 256-residue polypeptide: DNA repair protein RecO (256 aa).

Belongs to the RecO family.

Functionally, involved in DNA repair and RecF pathway recombination. The protein is DNA repair protein RecO of Nocardia farcinica (strain IFM 10152).